Reading from the N-terminus, the 293-residue chain is MPELPEVETVRRGLEQKLNNFIIKKVEVCRNSTVAFPTEKEEFIKGLQNSLLYKWDRRGKYLIAELKKIENENIKFPLKKLRQNNGFLVVHLRMTGYFKFIDNSTQPCKHTRIRVFDKKNNELRYIDVRSFGQMWWIKEGLSPNKIIKGLGSLGPEPFSKNFDEKYLKKVISKRKKSIKAILLDQTIVAGIGNIYADESLYSAGISPFRAAKTIKKNELINLKESIVNVLKKSIGSGGTTFSDFRDLEGENGNFGLQTNVYRRTGKECRKCGNLIEKQKIAGRSTHWCPNCQK.

The Schiff-base intermediate with DNA role is filled by Pro2. Glu3 (proton donor) is an active-site residue. The Proton donor; for beta-elimination activity role is filled by Lys60. Residues His110, Arg129, and Arg174 each contribute to the DNA site. An FPG-type zinc finger spans residues Asn259–Lys293. Catalysis depends on Arg283, which acts as the Proton donor; for delta-elimination activity.

This sequence belongs to the FPG family. In terms of assembly, monomer. The cofactor is Zn(2+).

It catalyses the reaction Hydrolysis of DNA containing ring-opened 7-methylguanine residues, releasing 2,6-diamino-4-hydroxy-5-(N-methyl)formamidopyrimidine.. The enzyme catalyses 2'-deoxyribonucleotide-(2'-deoxyribose 5'-phosphate)-2'-deoxyribonucleotide-DNA = a 3'-end 2'-deoxyribonucleotide-(2,3-dehydro-2,3-deoxyribose 5'-phosphate)-DNA + a 5'-end 5'-phospho-2'-deoxyribonucleoside-DNA + H(+). Functionally, involved in base excision repair of DNA damaged by oxidation or by mutagenic agents. Acts as a DNA glycosylase that recognizes and removes damaged bases. Has a preference for oxidized purines, such as 7,8-dihydro-8-oxoguanine (8-oxoG). Has AP (apurinic/apyrimidinic) lyase activity and introduces nicks in the DNA strand. Cleaves the DNA backbone by beta-delta elimination to generate a single-strand break at the site of the removed base with both 3'- and 5'-phosphates. The sequence is that of Formamidopyrimidine-DNA glycosylase from Prochlorococcus marinus (strain MIT 9312).